Reading from the N-terminus, the 293-residue chain is MELKQLITFITAAEHVNFTLTAKMLNYAQSSVTSQIKSLEEEIGTPLFERLGKRLILTEAGKTFKSYAQKIIALTEEAKMATNQVRETTGTLKIGATESQCTYRLPPIIKEFKQAFPQVKLIFKPYISNEQAKEQLLQGQLDITFILDVNRMEDALHVESLIQDEIKMVAANDHPFPADLPVTLKDLQNETLLLTEDGCSYRTLFENNLHDSGIYPNKLEFVSIEAIKQCVMAGLGIGILPEMTVKDDIAAGRMKELNWQSDCPVFTQLAWHKDKWMSAPLKAFIDLTRKTFK.

The 58-residue stretch at 1-58 (MELKQLITFITAAEHVNFTLTAKMLNYAQSSVTSQIKSLEEEIGTPLFERLGKRLILT) folds into the HTH lysR-type domain. The H-T-H motif DNA-binding region spans 18–37 (FTLTAKMLNYAQSSVTSQIK).

The protein belongs to the LysR transcriptional regulatory family.

Its subcellular location is the cytoplasm. This is an uncharacterized protein from Bacillus subtilis (strain 168).